Reading from the N-terminus, the 396-residue chain is Aspartate aminotransferase (396 aa).

Positions 34, 130, and 183 each coordinate L-aspartate. An N6-(pyridoxal phosphate)lysine modification is found at lysine 246. Arginine 374 lines the L-aspartate pocket.

The protein belongs to the class-I pyridoxal-phosphate-dependent aminotransferase family. Homodimer. It depends on pyridoxal 5'-phosphate as a cofactor.

It is found in the cytoplasm. It carries out the reaction L-aspartate + 2-oxoglutarate = oxaloacetate + L-glutamate. The polypeptide is Aspartate aminotransferase (aspC) (Salmonella typhi).